Reading from the N-terminus, the 1420-residue chain is DNA-directed RNA polymerase subunit beta' (1420 aa).

Residues cysteine 70, cysteine 72, cysteine 85, and cysteine 88 each contribute to the Zn(2+) site. Mg(2+)-binding residues include aspartate 464, aspartate 466, and aspartate 468. Zn(2+)-binding residues include cysteine 823, cysteine 897, cysteine 904, and cysteine 907.

The protein belongs to the RNA polymerase beta' chain family. As to quaternary structure, the RNAP catalytic core consists of 2 alpha, 1 beta, 1 beta' and 1 omega subunit. When a sigma factor is associated with the core the holoenzyme is formed, which can initiate transcription. Requires Mg(2+) as cofactor. It depends on Zn(2+) as a cofactor.

The catalysed reaction is RNA(n) + a ribonucleoside 5'-triphosphate = RNA(n+1) + diphosphate. Functionally, DNA-dependent RNA polymerase catalyzes the transcription of DNA into RNA using the four ribonucleoside triphosphates as substrates. The protein is DNA-directed RNA polymerase subunit beta' of Polynucleobacter necessarius subsp. necessarius (strain STIR1).